The sequence spans 338 residues: 26S proteasome non-ATPase regulatory subunit 7 (338 aa).

The 137-residue stretch at 11-147 folds into the MPN domain; it reads VIVHPLVLLS…TEAYISVEEV (137 aa). A disordered region spans residues 286 to 338; sequence RDAEEGKSDSKEAKEKNKDSKDKDNKETKDKDGKKAEEKADKGKDEGGKGSRK.

The protein belongs to the peptidase M67A family.

In terms of biological role, acts as a regulatory subunit of the 26S proteasome which is involved in the ATP-dependent degradation of ubiquitinated proteins. The chain is 26S proteasome non-ATPase regulatory subunit 7 (Rpn8) from Drosophila melanogaster (Fruit fly).